An 83-amino-acid chain; its full sequence is Conotoxin LiCr95 (83 aa).

A signal peptide spans 1-22 (MKLTCALIVAMLFLTACQLTTT). Positions 23 to 50 (DDSRGRQKYPTERLRVKMRNPKLSKLTK) are excised as a propeptide. 3 disulfides stabilise this stretch: Cys52–Cys67, Cys59–Cys71, and Cys66–Cys80.

This sequence belongs to the conotoxin O1 superfamily. In terms of tissue distribution, expressed by the venom duct.

The protein resides in the secreted. This is Conotoxin LiCr95 from Conus lividus (Livid cone).